A 231-amino-acid polypeptide reads, in one-letter code: Cytidylate kinase (231 aa).

17–25 (GPTASGKGT) serves as a coordination point for ATP.

It belongs to the cytidylate kinase family. Type 1 subfamily.

It is found in the cytoplasm. The enzyme catalyses CMP + ATP = CDP + ADP. It carries out the reaction dCMP + ATP = dCDP + ADP. The protein is Cytidylate kinase of Ralstonia pickettii (strain 12J).